The sequence spans 308 residues: Pseudouridine-5'-phosphate glycosidase (308 aa).

Glu-29 acts as the Proton donor in catalysis. 2 residues coordinate substrate: Lys-90 and Val-110. Asp-142 is a Mn(2+) binding site. 144 to 146 contacts substrate; it reads SSD. Lys-163 functions as the Nucleophile in the catalytic mechanism.

Belongs to the pseudouridine-5'-phosphate glycosidase family. Homotrimer. Requires Mn(2+) as cofactor.

It catalyses the reaction D-ribose 5-phosphate + uracil = psi-UMP + H2O. Functionally, catalyzes the reversible cleavage of pseudouridine 5'-phosphate (PsiMP) to ribose 5-phosphate and uracil. Functions biologically in the cleavage direction, as part of a pseudouridine degradation pathway. The sequence is that of Pseudouridine-5'-phosphate glycosidase from Serratia proteamaculans (strain 568).